The chain runs to 1711 residues: Nuclear pore complex protein Nup214 (1711 aa).

8 consecutive repeat copies span residues 472 to 473 (FG), 486 to 487 (FG), 497 to 498 (FG), 511 to 512 (FG), 514 to 515 (FG), 535 to 536 (FG), 588 to 589 (TS), and 598 to 599 (SL). The segment at 472–1703 (FGAAAAKAPA…NSNAQKPAFG (1232 aa)) is 45 X 2 AA repeats of F-G. Leucine-zipper stretches follow at residues 650–672 (LDDL…VQGL) and 767–788 (LTRL…KSKL). Positions 886–905 (KPATANKYTQAAVAPPSPPD) are disordered. Residues 1009-1010 (FG) form repeat 9. The interval 1012–1081 (GSPAVAAPTP…NKSFGFGGFT (70 aa)) is disordered. Composition is skewed to basic and acidic residues over residues 1037–1051 (TKPK…KEFK) and 1058–1072 (EESK…ETEN). The segment at 1044–1711 (AAESKEFKAV…FGGSSFMNYR (668 aa)) is interaction with emb. 8 tandem repeats follow at residues 1075–1076 (FG), 1077–1078 (FG), 1097–1098 (FG), 1106–1107 (FG), 1135–1136 (FG), 1218–1219 (FG), 1229–1230 (FG), and 1240–1241 (FG). Residues 1251 to 1261 (TSVTEANNKTD) show a composition bias toward polar residues. A disordered region spans residues 1251-1270 (TSVTEANNKTDPISTTPSAI). 27 repeat units span residues 1356–1357 (FG), 1388–1389 (FG), 1399–1400 (FG), 1434–1435 (FG), 1449–1450 (FG), 1458–1459 (FG), 1472–1473 (FG), 1481–1482 (FG), 1487–1488 (FG), 1507–1508 (FG), 1512–1513 (FG), 1539–1540 (FG), 1547–1548 (FG), 1562–1563 (FG), 1571–1572 (FG), 1584–1585 (FG), 1588–1589 (FG), 1601–1602 (FG), 1617–1618 (FG), 1623–1624 (FG), 1629–1630 (FG), 1635–1636 (FG), 1641–1642 (FG), 1647–1648 (FG), 1650–1651 (FG), 1662–1663 (FG), and 1686–1687 (FG). 2 disordered regions span residues 1533-1552 (SPQA…SPAT) and 1557-1614 (SGGS…TTTP). Gly residues-rich tracts occupy residues 1560 to 1572 (SIFG…GGFG) and 1582 to 1595 (GGFG…GGGS). Residues 1596 to 1614 (VAQTGFGSPQAPQQQTTTP) show a composition bias toward low complexity. Residues 1688–1698 (NLAQTGNSNAQ) are compositionally biased toward polar residues. The segment at 1688–1711 (NLAQTGNSNAQKPAFGGSSFMNYR) is disordered. The stretch at 1702–1703 (FG) is repeat 45.

In terms of assembly, component of the nuclear pore complex. Interacts with mbo/Nup88 and (via C-terminus) with emb to attenuate emb-mediated protein export.

It is found in the nucleus. It localises to the nuclear pore complex. The protein localises to the nucleus membrane. Its function is as follows. Part of the nuclear pore complex. Serves as a docking site in the receptor-mediated import of substrates across the nuclear pore complex including emb, RanGAP and phosphorylated Mad. Protects mbo/Nup88 from proteasomal degradation at the nuclear pore. Together with mbo/Nup88, sequesters emb in the cytoplasm and thereby attenuates nuclear export signal (NES)-mediated nuclear export. Together with mbo/Nup88, required for the nuclear import of the Rel family transcription factors dorsal (dl) and Dorsal-related immunity factor (Dif) and the activation of an immune response. The sequence is that of Nuclear pore complex protein Nup214 from Drosophila melanogaster (Fruit fly).